We begin with the raw amino-acid sequence, 941 residues long: Cilia- and flagella-associated protein 69 (941 aa).

The span at 1–10 (MWTEEAAATA) shows a compositional bias: low complexity. The interval 1–23 (MWTEEAAATAEARESGIRNKSSS) is disordered.

It localises to the cell projection. It is found in the cilium. The protein localises to the flagellum. Cilium- and flagellum-associated protein. In the olfactory epithelium, regulates the speed of activation and termination of the odor response and thus contributes to the robustness of olfactory transduction pathways. Required for sperm flagellum assembly and stability. The polypeptide is Cilia- and flagella-associated protein 69 (Papio anubis (Olive baboon)).